Consider the following 220-residue polypeptide: MRLLITGTDTGVGKTFITYNLAKELKERGYKVGCLKPVETYVREVPEDGSLLSKATGQSVNEIVPVRFSLPLAPYAATLEEGRDFALEELGKHYEELSKKYKFLLVEGAGGIAVPIKKNYTYANLARDWKLKVLIVGRAGLGTINHTFLTWYYAKATGLEVIGIILNGFTGEDVSERTNPQIIEEMTGIKPYKVPRIQDVELPKDIRTGLADYVLSRFTP.

An ATP-binding site is contributed by 11 to 16; the sequence is GVGKTF. Thr15 serves as a coordination point for Mg(2+). Lys36 is an active-site residue. A substrate-binding site is contributed by Thr40. ATP is bound by residues Asp48 and 107–110; that span reads EGAG. Residues Asp48 and Glu107 each contribute to the Mg(2+) site.

This sequence belongs to the dethiobiotin synthetase family. Homodimer. Requires Mg(2+) as cofactor.

The protein resides in the cytoplasm. It catalyses the reaction (7R,8S)-7,8-diammoniononanoate + CO2 + ATP = (4R,5S)-dethiobiotin + ADP + phosphate + 3 H(+). It participates in cofactor biosynthesis; biotin biosynthesis; biotin from 7,8-diaminononanoate: step 1/2. In terms of biological role, catalyzes a mechanistically unusual reaction, the ATP-dependent insertion of CO2 between the N7 and N8 nitrogen atoms of 7,8-diaminopelargonic acid (DAPA, also called 7,8-diammoniononanoate) to form a ureido ring. The protein is ATP-dependent dethiobiotin synthetase BioD of Aquifex aeolicus (strain VF5).